Here is a 312-residue protein sequence, read N- to C-terminus: Pantothenate kinase (312 aa).

97 to 104 contacts ATP; sequence GSVAVGKS.

Belongs to the prokaryotic pantothenate kinase family.

The protein localises to the cytoplasm. It catalyses the reaction (R)-pantothenate + ATP = (R)-4'-phosphopantothenate + ADP + H(+). It participates in cofactor biosynthesis; coenzyme A biosynthesis; CoA from (R)-pantothenate: step 1/5. The protein is Pantothenate kinase of Corynebacterium glutamicum (strain ATCC 13032 / DSM 20300 / JCM 1318 / BCRC 11384 / CCUG 27702 / LMG 3730 / NBRC 12168 / NCIMB 10025 / NRRL B-2784 / 534).